A 529-amino-acid polypeptide reads, in one-letter code: Peptide chain release factor 3 (529 aa).

In terms of domain architecture, tr-type G spans 10-279 (EQRRCFGIIS…ALVEMAPAPG (270 aa)). Residues 19–26 (SHPDAGKT), 87–91 (DTPGH), and 141–144 (NKMD) each bind GTP.

Belongs to the TRAFAC class translation factor GTPase superfamily. Classic translation factor GTPase family. PrfC subfamily.

The protein localises to the cytoplasm. Its function is as follows. Increases the formation of ribosomal termination complexes and stimulates activities of RF-1 and RF-2. It binds guanine nucleotides and has strong preference for UGA stop codons. It may interact directly with the ribosome. The stimulation of RF-1 and RF-2 is significantly reduced by GTP and GDP, but not by GMP. This Desulfatibacillum aliphaticivorans protein is Peptide chain release factor 3.